The primary structure comprises 170 residues: Adenine phosphoribosyltransferase (170 aa).

It belongs to the purine/pyrimidine phosphoribosyltransferase family. Homodimer.

It is found in the cytoplasm. The catalysed reaction is AMP + diphosphate = 5-phospho-alpha-D-ribose 1-diphosphate + adenine. It participates in purine metabolism; AMP biosynthesis via salvage pathway; AMP from adenine: step 1/1. In terms of biological role, catalyzes a salvage reaction resulting in the formation of AMP, that is energically less costly than de novo synthesis. The sequence is that of Adenine phosphoribosyltransferase from Streptococcus pneumoniae (strain Hungary19A-6).